Here is a 413-residue protein sequence, read N- to C-terminus: NADH-quinone oxidoreductase subunit D (413 aa).

The protein belongs to the complex I 49 kDa subunit family. In terms of assembly, NDH-1 is composed of 14 different subunits. Subunits NuoB, C, D, E, F, and G constitute the peripheral sector of the complex.

Its subcellular location is the cell inner membrane. The enzyme catalyses a quinone + NADH + 5 H(+)(in) = a quinol + NAD(+) + 4 H(+)(out). Functionally, NDH-1 shuttles electrons from NADH, via FMN and iron-sulfur (Fe-S) centers, to quinones in the respiratory chain. The immediate electron acceptor for the enzyme in this species is believed to be ubiquinone. Couples the redox reaction to proton translocation (for every two electrons transferred, four hydrogen ions are translocated across the cytoplasmic membrane), and thus conserves the redox energy in a proton gradient. This is NADH-quinone oxidoreductase subunit D from Rhodobacter capsulatus (Rhodopseudomonas capsulata).